We begin with the raw amino-acid sequence, 114 residues long: Small ribosomal subunit protein bS6 (114 aa).

This sequence belongs to the bacterial ribosomal protein bS6 family.

Functionally, binds together with bS18 to 16S ribosomal RNA. The protein is Small ribosomal subunit protein bS6 of Bacteroides fragilis (strain YCH46).